The following is a 58-amino-acid chain: U8-ctenitoxin-Pk1a (58 aa).

Intrachain disulfides connect Cys-2/Cys-16, Cys-9/Cys-22, Cys-15/Cys-40, Cys-24/Cys-38, and Cys-48/Cys-55.

In terms of tissue distribution, expressed by the venom gland.

The protein resides in the secreted. In terms of biological role, no toxic effects on mice at dose levels of 5 ug per mouse. May be toxic to insects. This is U8-ctenitoxin-Pk1a from Phoneutria keyserlingi (Brazilian wandering spider).